We begin with the raw amino-acid sequence, 689 residues long: MAARTLGRGVGRLLGSLRGLSGQPARPPCGVSAPRRAASGPSGSAPAVAAAAAQPGSYPALSAQAAREPAAFWGPLARDTLVWDTPYHTVWDCDFSTGKIGWFLGGQLNVSVNCLDQHVRKSPESVALIWERDEPGTEVRITYRELLETTCRLANTLKRHGVHRGDRVAIYMPVSPLAVAAMLACARIGAVHTVIFAGFSAESLAGRINDAKCKVVITFNQGLRGGRVVELKKIVDEAVKHCPTVQHVLVAHRTDNKVHMGDLDVPLEQEMAKEDPVCAPESMGSEDMLFMLYTSGSTGMPKGIVHTQAGYLLYAALTHKLVFDHQPGDIFGCVADIGWITGHSYVVYGPLCNGATSVLFESTPVYPNAGRYWETVERLKINQFYGAPTAVRLLLKYGDAWVKKYDRSSLRTLGSVGEPINCEAWEWLHRVVGDSRCTLVDTWWQTETGGICIAPRPSEEGAEILPAMAMRPFFGIVPVLMDEKGSVVEGSNVSGALCISQAWPGMARTIYGDHQRFVDAYFKAYPGYYFTGDGAYRTEGGYYQITGRMDDVINISGHRLGTAEIEDAIADHPAVPESAVIGYPHDIKGEAAFAFIVVKDSAGDSDVVVQELKSMVATKIAKYAVPDEILVVKRLPKTRSGKVMRRLLRKIITSEAQELGDTTTLEDPSIIAEILSVYQKCKDKQAAAK.

The N-terminal 37 residues, 1–37 (MAARTLGRGVGRLLGSLRGLSGQPARPPCGVSAPRRA), are a transit peptide targeting the mitochondrion. The segment at 17–46 (LRGLSGQPARPPCGVSAPRRAASGPSGSAP) is disordered. Low complexity predominate over residues 32 to 46 (SAPRRAASGPSGSAP). Residues 224-227 (RGGR) and Thr-341 each bind CoA. Position 396 is an N6-acetyllysine (Lys-396). ATP is bound by residues 417–419 (GEP), 441–446 (DTWWQT), Asp-533, and Arg-548. Position 556 (Ser-556) interacts with CoA. Arg-559 contacts ATP. Lys-642 carries the post-translational modification N6-acetyllysine.

Belongs to the ATP-dependent AMP-binding enzyme family. Interacts with SIRT3. Reversibly acetylated on Lys-642. The acetyl-CoA synthase activity is inhibited by acetylation and activated by deacetylation mediated by the deacetylase SIRT3.

It localises to the mitochondrion matrix. It catalyses the reaction acetate + ATP + CoA = acetyl-CoA + AMP + diphosphate. It carries out the reaction propanoate + ATP + CoA = propanoyl-CoA + AMP + diphosphate. Its activity is regulated as follows. Inhibited by acetylation at Lys-642 and activated by deacetylation mediated by the deacetylase SIRT3. Functionally, catalyzes the synthesis of acetyl-CoA from short-chain fatty acids. Acetate is the preferred substrate. Can also utilize propionate with a much lower affinity. Provides acetyl-CoA that is utilized mainly for oxidation under ketogenic conditions. Involved in thermogenesis under ketogenic conditions, using acetate as a vital fuel when carbohydrate availability is insufficient. This chain is Acetyl-coenzyme A synthetase 2-like, mitochondrial (ACSS1), found in Homo sapiens (Human).